Reading from the N-terminus, the 225-residue chain is Cytochrome c oxidase subunit 2 (225 aa).

Topologically, residues 1-25 (MSTWMMFMFQESNSLYADNLVSFHN) are mitochondrial intermembrane. Residues 26-47 (MVMIIVIMISTLTVYIIFDLFL) form a helical membrane-spanning segment. The Mitochondrial matrix segment spans residues 48–62 (NKFSNLYLLKNHNIE). A helical membrane pass occupies residues 63 to 82 (IIWMIVPIVILLIICFPSLK). Topologically, residues 83–225 (ILYLIDEIVN…YFMNWIYKMN (143 aa)) are mitochondrial intermembrane. 6 residues coordinate Cu cation: His-159, Cys-194, Glu-196, Cys-198, His-202, and Met-205. Glu-196 is a binding site for Mg(2+).

This sequence belongs to the cytochrome c oxidase subunit 2 family. As to quaternary structure, component of the cytochrome c oxidase (complex IV, CIV), a multisubunit enzyme composed of a catalytic core of 3 subunits and several supernumerary subunits. The complex exists as a monomer or a dimer and forms supercomplexes (SCs) in the inner mitochondrial membrane with ubiquinol-cytochrome c oxidoreductase (cytochrome b-c1 complex, complex III, CIII). Requires Cu cation as cofactor.

The protein localises to the mitochondrion inner membrane. It catalyses the reaction 4 Fe(II)-[cytochrome c] + O2 + 8 H(+)(in) = 4 Fe(III)-[cytochrome c] + 2 H2O + 4 H(+)(out). Component of the cytochrome c oxidase, the last enzyme in the mitochondrial electron transport chain which drives oxidative phosphorylation. The respiratory chain contains 3 multisubunit complexes succinate dehydrogenase (complex II, CII), ubiquinol-cytochrome c oxidoreductase (cytochrome b-c1 complex, complex III, CIII) and cytochrome c oxidase (complex IV, CIV), that cooperate to transfer electrons derived from NADH and succinate to molecular oxygen, creating an electrochemical gradient over the inner membrane that drives transmembrane transport and the ATP synthase. Cytochrome c oxidase is the component of the respiratory chain that catalyzes the reduction of oxygen to water. Electrons originating from reduced cytochrome c in the intermembrane space (IMS) are transferred via the dinuclear copper A center (CU(A)) of subunit 2 and heme A of subunit 1 to the active site in subunit 1, a binuclear center (BNC) formed by heme A3 and copper B (CU(B)). The BNC reduces molecular oxygen to 2 water molecules using 4 electrons from cytochrome c in the IMS and 4 protons from the mitochondrial matrix. In Apis florea (Dwarf honeybee), this protein is Cytochrome c oxidase subunit 2 (COII).